A 545-amino-acid chain; its full sequence is MGNCNACVRPDSKESKPSSKPKKPNRDRKLNPFAGDFTRSPAPIRVLKDVIPMSNQTQISDKYILGRELGRGEFGITYLCTDRETHEALACKSISKRKLRTAVDIEDVRREVAIMSTLPEHPNVVKLKASYEDNENVHLVMELCEGGELFDRIVARGHYTERAAAAVARTIAEVVMMCHSNGVMHRDLKPENFLFANKKENSPLKAIDFGLSVFFKPGDKFTEIVGSPYYMAPEVLKRDYGPGVDVWSAGVIIYILLCGVPPFWAETEQGVALAILRGVLDFKRDPWPQISESAKSLVKQMLDPDPTKRLTAQQVLAHPWIQNAKKAPNVPLGDIVRSRLKQFSMMNRFKKKVLRVIAEHLSIQEVEVIKNMFSLMDDDKDGKITYPELKAGLQKVGSQLGEPEIKMLMEVADVDGNGFLDYGEFVAVIIHLQKIENDELFKLAFMFFDKDGSTYIELDELREALADELGEPDASVLSDIMREVDTDKDGRINYDEFVTMMKAGTDWRKASRQYSRERFKSLSINLMKDGSLHLHDALTGQTVPV.

Residues 1 to 36 form a disordered region; sequence MGNCNACVRPDSKESKPSSKPKKPNRDRKLNPFAGD. The N-myristoyl glycine moiety is linked to residue Gly-2. A Protein kinase domain is found at 63 to 321; sequence YILGRELGRG…AQQVLAHPWI (259 aa). Residues 69–77 and Lys-92 each bind ATP; that span reads LGRGEFGIT. Residue Asp-187 is the Proton acceptor of the active site. A Phosphoserine modification is found at Ser-227. Residues 327–357 form an autoinhibitory domain region; the sequence is APNVPLGDIVRSRLKQFSMMNRFKKKVLRVI. EF-hand domains lie at 364-399, 400-435, 436-471, and 472-507; these read QEVE…VGSQ, LGEP…LQKI, ENDE…ELGE, and PDAS…GTDW. The Ca(2+) site is built by Asp-377, Asp-379, Asp-381, Lys-383, Glu-388, Asp-413, Asp-415, Asn-417, Glu-424, Asp-449, Asp-451, Ser-453, Tyr-455, Glu-460, Asp-485, Asp-487, Asp-489, Arg-491, and Glu-496.

It belongs to the protein kinase superfamily. Ser/Thr protein kinase family. CDPK subfamily.

It localises to the membrane. It carries out the reaction L-seryl-[protein] + ATP = O-phospho-L-seryl-[protein] + ADP + H(+). The enzyme catalyses L-threonyl-[protein] + ATP = O-phospho-L-threonyl-[protein] + ADP + H(+). With respect to regulation, activated by calcium. Autophosphorylation may play an important role in the regulation of the kinase activity. May play a role in signal transduction pathways that involve calcium as a second messenger. May be a positive regulator controlling stress signal transduction. This is Calcium-dependent protein kinase 10 (CPK10) from Arabidopsis thaliana (Mouse-ear cress).